A 218-amino-acid chain; its full sequence is Large ribosomal subunit protein bL25 (218 aa).

Positions alanine 185 to glutamate 218 are disordered. Residues glutamate 190 to alanine 200 are compositionally biased toward acidic residues. The span at glutamate 203–arginine 212 shows a compositional bias: basic and acidic residues.

It belongs to the bacterial ribosomal protein bL25 family. CTC subfamily. In terms of assembly, part of the 50S ribosomal subunit; part of the 5S rRNA/L5/L18/L25 subcomplex. Contacts the 5S rRNA. Binds to the 5S rRNA independently of L5 and L18.

Its function is as follows. This is one of the proteins that binds to the 5S RNA in the ribosome where it forms part of the central protuberance. The protein is Large ribosomal subunit protein bL25 of Roseiflexus castenholzii (strain DSM 13941 / HLO8).